Consider the following 369-residue polypeptide: Protein DUF642 L-GALACTONO-1,4-LACTONE-RESPONSIVE GENE 2 (369 aa).

An N-terminal signal peptide occupies residues 1–19 (MEGVTVVSFFLLFIATAMA). Asparagine 125 is a glycosylation site (N-linked (GlcNAc...) asparagine).

Expressed in roots, seedlings and leaves.

It is found in the secreted. The protein resides in the cell wall. Involved in the regulation of testa rupture during seed germination. Required during roots and rosettes development. This Arabidopsis thaliana (Mouse-ear cress) protein is Protein DUF642 L-GALACTONO-1,4-LACTONE-RESPONSIVE GENE 2.